The chain runs to 276 residues: MSWHAHLHLDYRQEAARSVARFRHDGPLRILQSLYPEGDAICHNVLVHPPGGLVGGDTLDIDIEAADASHGLITTPGASRFYRSEGELALQRTRIRLAKGARLEWLPLEAICYSGCRAENRLTIEAEPGAEMIGWDVTALGLPNANQPFERGTYLQHIEVPGVWLERGRIDAADHRLLQSPLGFGGHRCIASLFFVSGTPAARARREALLALARTAIDAHGLQESAGATSPHAEIVVLRVLAPVVEPAMQLLRQVWQAWRAELWQLPASSPRIWAT.

This sequence belongs to the UreD family. In terms of assembly, ureD, UreF and UreG form a complex that acts as a GTP-hydrolysis-dependent molecular chaperone, activating the urease apoprotein by helping to assemble the nickel containing metallocenter of UreC. The UreE protein probably delivers the nickel.

The protein resides in the cytoplasm. In terms of biological role, required for maturation of urease via the functional incorporation of the urease nickel metallocenter. In Variovorax paradoxus (strain S110), this protein is Urease accessory protein UreD.